The chain runs to 580 residues: High affinity choline transporter 1 (580 aa).

Residues 1-6 (MPFHVE) are Extracellular-facing. Residues 7 to 27 (GLVAIILFYLLIFLVGIWAAW) traverse the membrane as a helical segment. At 28–48 (KTKNSGNAEERSEAIIVGGRD) the chain is on the cytoplasmic side. A helical transmembrane segment spans residues 49 to 69 (IGLLVGGFTMTATWVGGGYIN). Topologically, residues 70 to 81 (GTAEAVYGPGCG) are extracellular. A helical membrane pass occupies residues 82 to 102 (LAWAQAPIGYSLSLILGGLFF). The Cytoplasmic segment spans residues 103–125 (AKPMRSKGYVTMLDPFQQIYGKR). The helical transmembrane segment at 126 to 146 (MGGLLFIPALMGEMFWAAAIF) threads the bilayer. The Extracellular segment spans residues 147–164 (SALGATISVIIDVDVNIS). The chain crosses the membrane as a helical span at residues 165-185 (VIVSALIAILYTLVGGLYSVA). At 186-191 (YTDVVQ) the chain is on the cytoplasmic side. A helical membrane pass occupies residues 192-212 (LFCIFIGLWISVPFALSHPAV). Residues 213 to 237 (TDIGFTAVHAKYQSPWLGTIESVEV) lie on the Extracellular side of the membrane. Residues 238–258 (YTWLDNFLLLMLGGIPWQAYF) traverse the membrane as a helical segment. Residues 259–274 (QRVLSSSSATYAQVLS) lie on the Cytoplasmic side of the membrane. Residues 275–295 (FLAAFGCLVMALPAICIGAIG) form a helical membrane-spanning segment. Residues 296–317 (ASTDWNQTAYGFPDPKTKEEAD) are Extracellular-facing. Residue Asn-301 is glycosylated (N-linked (GlcNAc...) asparagine). A helical membrane pass occupies residues 318 to 338 (MILPIVLQYLCPVYISFFGLG). Over 339 to 376 (AVSAAVMSSADSSILSASSMFARNIYQLSFRQNASDKE) the chain is Cytoplasmic. Residues 377-397 (IVWVMRITVFVFGASATAMAL) form a helical membrane-spanning segment. Residues 398–406 (LTKTVYGLW) lie on the Extracellular side of the membrane. Residues 407 to 427 (YLSSDLVYIIIFPQLLCVLFI) traverse the membrane as a helical segment. Residues 428-435 (KGTNTYGA) lie on the Cytoplasmic side of the membrane. Residues 436 to 456 (VAGYIFGLFLRITGGEPYLYL) form a helical membrane-spanning segment. Topologically, residues 457–481 (QPLIFYPGYYPDKNGIYNQRFPFKT) are extracellular. A helical membrane pass occupies residues 482 to 502 (LSMVTSFFTNICVSYLAKYLF). The mediates interaction with SEC14L1 stretch occupies residues 502–580 (FESGTLPPKL…EGSGTEDNLQ (79 aa)). Topologically, residues 503–580 (ESGTLPPKLD…EGSGTEDNLQ (78 aa)) are cytoplasmic. The Dileucine-like motif signature appears at 527 to 532 (DKTILV).

This sequence belongs to the sodium:solute symporter (SSF) (TC 2.A.21) family. As to quaternary structure, homooligomerizes at cell surface. Interacts with SEC14L1; may regulate SLC5A7. Post-translationally, phosphorylated. In terms of tissue distribution, expressed in basal forebrain, brain stem, spinal chord, and striatum. Specific for cholinergic neurons.

Its subcellular location is the presynaptic cell membrane. The protein resides in the cell projection. It localises to the axon. It is found in the early endosome membrane. The protein localises to the cytoplasmic vesicle. Its subcellular location is the secretory vesicle. The protein resides in the synaptic vesicle membrane. The enzyme catalyses choline(out) + n Na(+)(out) = choline(in) + n Na(+)(in). Its activity is regulated as follows. Choline uptake activity is regulated by SLC5A7/CHT1 internalization (inactive form) from the cell surface and recycling of internalized SLC5A7/CHT1 into the cell surface (active form). Activated by extracellular chloride ion. Specifically inhibited by nanomolar concentrations of hemicholinium 3. High-affinity Na(+)-coupled choline transmembrane symporter. Functions as an electrogenic, voltage-dependent transporter with variable charge/choline stoichiometry. Choline uptake and choline-induced current is also Cl(-)-dependent where Cl(-) is likely a regulatory ion rather than cotransported ion. Plays a critical role in acetylcholine (ACh) synthesis by taking up the substrate choline from the synaptic cleft into the presynaptic nerve terminals after neurotransmitter release. SLC5A7/CHT1-mediated choline high-affinity transport in cholinergic neurons is the rate-limiting step for production of ACh, thereby facilitating communication by subsequent action potentials. Localized predominantly in presynaptic terminal intracellular organelles, and translocated to the plasma membrane in active form in response to neuronal activity. The chain is High affinity choline transporter 1 from Rattus norvegicus (Rat).